The sequence spans 941 residues: Protein translocase subunit SecA (941 aa).

ATP is bound by residues glutamine 87, 105-109 (GEGKT), and aspartate 524. The tract at residues 871–919 (DEQPPMPAMEAHKLDPNTGEDQVAQAQSGLAPVAPAKRDPANPATWGKV) is disordered. Zn(2+) is bound by residues cysteine 925, cysteine 927, cysteine 936, and histidine 937.

Belongs to the SecA family. Monomer and homodimer. Part of the essential Sec protein translocation apparatus which comprises SecA, SecYEG and auxiliary proteins SecDF-YajC and YidC. It depends on Zn(2+) as a cofactor.

Its subcellular location is the cell inner membrane. It is found in the cytoplasm. It carries out the reaction ATP + H2O + cellular proteinSide 1 = ADP + phosphate + cellular proteinSide 2.. In terms of biological role, part of the Sec protein translocase complex. Interacts with the SecYEG preprotein conducting channel. Has a central role in coupling the hydrolysis of ATP to the transfer of proteins into and across the cell membrane, serving both as a receptor for the preprotein-SecB complex and as an ATP-driven molecular motor driving the stepwise translocation of polypeptide chains across the membrane. The sequence is that of Protein translocase subunit SecA from Afipia carboxidovorans (strain ATCC 49405 / DSM 1227 / KCTC 32145 / OM5) (Oligotropha carboxidovorans).